We begin with the raw amino-acid sequence, 1412 residues long: Cardiac-enriched FHL2-interacting protein (1412 aa).

Disordered regions lie at residues 106–177, 202–443, 460–500, 517–848, 877–923, 935–1255, and 1344–1412; these read VQGE…PKFA, VSNT…YNPP, LETS…SKAP, YSPL…TNKH, SEDS…VPGT, EDPV…YPAT, and RQGS…EGVS. Phosphothreonine is present on Thr120. Residues 135-145 show a composition bias toward low complexity; sequence SSSKPISKVSS. The segment covering 161 to 171 has biased composition (pro residues); the sequence is RPPPSKPPALK. The span at 202 to 212 shows a compositional bias: polar residues; that stretch reads VSNTHQGSHQS. Composition is skewed to basic and acidic residues over residues 285–299 and 306–316; these read WDTH…KDIA and KAPKHYEDMPL. Residue Ser328 is modified to Phosphoserine. A compositionally biased stretch (polar residues) spans 343-352; it reads SPSGSQSTSG. Residues 378–389 are compositionally biased toward basic residues; it reads KRSKAPWRKPKT. Residue Ser473 is modified to Phosphoserine. Composition is skewed to basic and acidic residues over residues 482 to 496 and 525 to 538; these read QEKE…DSYK and GFDE…DSKQ. Residues 587–612 show a composition bias toward low complexity; sequence SHPTFSSPSASSQTHFCVNGEAAESN. Over residues 632-641 the composition is skewed to basic and acidic residues; that stretch reads GHPDCRENLP. Composition is skewed to polar residues over residues 670–679, 687–697, and 712–722; these read NGLSRSVSQE, GFQSLPLNQKF, and SDSQSDFTPCR. The segment covering 728–741 has biased composition (low complexity); that stretch reads FSTSSSDQSFASFE. Basic and acidic residues predominate over residues 753 to 799; it reads QEDRKSHVSAGDKQRDETAVEKEESQQCASRNEHRGVDEQRQEEIQR. Position 813 is a phosphoserine (Ser813). A compositionally biased stretch (basic and acidic residues) spans 826-837; the sequence is ADKDTAHTHAKD. 3 stretches are compositionally biased toward polar residues: residues 904 to 921, 943 to 953, and 1047 to 1066; these read ASES…NDVP, QDETSQQTRKG, and AETS…SPAA. Residues 1164-1175 show a composition bias toward basic residues; sequence RRAKKLASKRRK. Basic and acidic residues predominate over residues 1176–1203; that stretch reads SDQLLEKHTEAWEGKSFTEDTQGTERRP. A compositionally biased stretch (acidic residues) spans 1401–1412; the sequence is DDLEDFATEGVS.

In terms of assembly, interacts with FHL2. In terms of tissue distribution, expressed in the heart and skeletal muscle (at protein level).

It localises to the cytoplasm. Its subcellular location is the myofibril. The protein localises to the sarcomere. The protein resides in the z line. In terms of biological role, plays an important role in cardiomyocyte hypertrophy via activation of the calcineurin/NFAT signaling pathway. This is Cardiac-enriched FHL2-interacting protein from Mus musculus (Mouse).